The sequence spans 367 residues: uncharacterized protein (367 aa).

Belongs to the Gfo/Idh/MocA family.

This is an uncharacterized protein from Streptococcus pneumoniae serotype 4 (strain ATCC BAA-334 / TIGR4).